The following is a 222-amino-acid chain: Phosphoglycolate phosphatase (222 aa).

D8 functions as the Nucleophile in the catalytic mechanism. Mg(2+) is bound by residues D8 and D10. K150 lines the substrate pocket. 2 residues coordinate Mg(2+): D173 and D177.

The protein belongs to the archaeal SPP-like hydrolase family. Requires Mg(2+) as cofactor.

It carries out the reaction 2-phosphoglycolate + H2O = glycolate + phosphate. Its function is as follows. Catalyzes the dephosphorylation of 2-phosphoglycolate. This Metallosphaera sedula (strain ATCC 51363 / DSM 5348 / JCM 9185 / NBRC 15509 / TH2) protein is Phosphoglycolate phosphatase.